Reading from the N-terminus, the 156-residue chain is Putative pre-16S rRNA nuclease (156 aa).

Belongs to the YqgF nuclease family.

It localises to the cytoplasm. Could be a nuclease involved in processing of the 5'-end of pre-16S rRNA. This chain is Putative pre-16S rRNA nuclease, found in Ehrlichia ruminantium (strain Welgevonden).